The primary structure comprises 286 residues: Bifunctional protein FolD (286 aa).

NADP(+) contacts are provided by residues 165 to 167 (GRS) and Ser190.

Belongs to the tetrahydrofolate dehydrogenase/cyclohydrolase family. Homodimer.

The enzyme catalyses (6R)-5,10-methylene-5,6,7,8-tetrahydrofolate + NADP(+) = (6R)-5,10-methenyltetrahydrofolate + NADPH. It carries out the reaction (6R)-5,10-methenyltetrahydrofolate + H2O = (6R)-10-formyltetrahydrofolate + H(+). It functions in the pathway one-carbon metabolism; tetrahydrofolate interconversion. Its function is as follows. Catalyzes the oxidation of 5,10-methylenetetrahydrofolate to 5,10-methenyltetrahydrofolate and then the hydrolysis of 5,10-methenyltetrahydrofolate to 10-formyltetrahydrofolate. This Burkholderia orbicola (strain MC0-3) protein is Bifunctional protein FolD.